The following is a 439-amino-acid chain: Mitochondrial distribution and morphology protein 10 (439 aa).

The segment at 275–305 (LPDATPPSFQVPSSSSSSSNPVSPSTSQPPT) is disordered. Over residues 280–305 (PPSFQVPSSSSSSSNPVSPSTSQPPT) the composition is skewed to low complexity.

This sequence belongs to the MDM10 family. In terms of assembly, component of the ER-mitochondria encounter structure (ERMES) or MDM complex, composed of MMM1, MDM10, MDM12 and MDM34. Associates with the mitochondrial outer membrane sorting assembly machinery SAM(core) complex.

It localises to the mitochondrion outer membrane. In terms of biological role, component of the ERMES/MDM complex, which serves as a molecular tether to connect the endoplasmic reticulum and mitochondria. Components of this complex are involved in the control of mitochondrial shape and protein biogenesis and may function in phospholipid exchange. MDM10 is involved in the late assembly steps of the general translocase of the mitochondrial outer membrane (TOM complex). Functions in the TOM40-specific route of the assembly of outer membrane beta-barrel proteins, including the association of TOM40 with the receptor TOM22 and small TOM proteins. Can associate with the SAM(core) complex as well as the MDM12-MMM1 complex, both involved in late steps of the major beta-barrel assembly pathway, that is responsible for biogenesis of all outer membrane beta-barrel proteins. May act as a switch that shuttles between both complexes and channels precursor proteins into the TOM40-specific pathway. Plays a role in mitochondrial morphology and in the inheritance of mitochondria. This Laccaria bicolor (strain S238N-H82 / ATCC MYA-4686) (Bicoloured deceiver) protein is Mitochondrial distribution and morphology protein 10.